The sequence spans 612 residues: Indole-3-acetic acid-amido synthetase GH3.6 (612 aa).

This sequence belongs to the IAA-amido conjugating enzyme family. As to expression, expressed in cotyledons, stipules, true leaves, hypocotyls, and all parts of the roots. Not detected in flowers.

Functionally, catalyzes the synthesis of indole-3-acetic acid (IAA)-amino acid conjugates, providing a mechanism for the plant to cope with the presence of excess auxin. Strongly reactive with Glu, Gln, Trp, Asp, Ala, Leu, Phe, Gly, Tyr, Met, Ile and Val. Little or no product formation with His, Ser, Thr, Arg, Lys, or Cys. Also active on pyruvic and butyric acid analogs of IAA, PAA and the synthetic auxin naphthaleneacetic acid (NAA). The two chlorinated synthetic auxin herbicides 2,4-D and 3,6-dichloro-o-anisic acid (dicamba) cannot be used as substrates. Involved in auxin signal transduction. Inhibits shoot and hypocotyl cell elongation, and lateral root cell differentiation in light. The protein is Indole-3-acetic acid-amido synthetase GH3.6 (GH3.6) of Arabidopsis thaliana (Mouse-ear cress).